Consider the following 493-residue polypeptide: uncharacterized protein (493 aa).

Residues Thr-96–Thr-124 are disordered.

This is an uncharacterized protein from Caulobacter vibrioides (strain ATCC 19089 / CIP 103742 / CB 15) (Caulobacter crescentus).